Reading from the N-terminus, the 192-residue chain is Transcription termination/antitermination protein NusG (192 aa).

It belongs to the NusG family.

In terms of biological role, participates in transcription elongation, termination and antitermination. This is Transcription termination/antitermination protein NusG from Rickettsia prowazekii (strain Madrid E).